The following is a 416-amino-acid chain: LysM domain-containing GPI-anchored protein 1 (416 aa).

A signal peptide spans 1-27 (MKIPEKPIFLIFVSLILASSLTFTATA). 4 disulfides stabilise this stretch: Cys-34-Cys-100, Cys-40-Cys-163, Cys-98-Cys-161, and Cys-100-Cys-163. Asn-37 carries N-linked (GlcNAc...) asparagine glycosylation. The region spanning 110–157 (THYKTRPSDNLGSIADSVYGGLVSAEQIQEANSVNDPSLLDVGTSLVI) is the LysM 1 domain. Residue Asn-165 is glycosylated (N-linked (GlcNAc...) asparagine). In terms of domain architecture, LysM 2 spans 176–219 (LSYVVKEIDTLVGIARRYSTTITDLMNVNAMGAPDVSSGDILAV). 2 disulfide bridges follow: Cys-224/Cys-256 and Cys-251/Cys-279. Asn-241 is a glycosylation site (N-linked (GlcNAc...) asparagine). Residues Asn-288, Asn-299, and Asn-310 are each glycosylated (N-linked (GlcNAc...) asparagine). Residues 356 to 376 (DGPGSIASSPRSSMLPGGGIL) form a disordered region. Ala-391 carries GPI-anchor amidated alanine lipidation. The propeptide at 392–416 (SASSVSYFFITFLISIASFSLALSS) is removed in mature form.

Interacts with peptidoglycans.

The protein localises to the cell membrane. It is found in the secreted. Its function is as follows. Required as a cell surface receptor for peptidoglycan (PGN) elicitor signaling leading to innate immunity. Plays an essential role in detecting PGNs and restricting bacterial growth (of Pseudomonas syringae pv. tomato DC3000 for example). The polypeptide is LysM domain-containing GPI-anchored protein 1 (LYM1) (Arabidopsis thaliana (Mouse-ear cress)).